A 355-amino-acid chain; its full sequence is Methyltransferase FUS9 (355 aa).

5 residues coordinate S-adenosyl-L-homocysteine: Tyr-18, Asn-63, Asp-86, Ser-123, and Phe-124. Phe-231 is a binding site for Mg(2+).

This sequence belongs to the methyltransferase superfamily. Type-7 methyltransferase family. It depends on Mg(2+) as a cofactor.

Its pathway is mycotoxin biosynthesis. Its function is as follows. Methyltransferase; part of the gene cluster that mediates the biosynthesis of the mycotoxin fusarin C. Within the cluster, FUS1, FUS2, FUS8 and FUS9 are sufficient for fusarin production. The roles of the other FUS members are yet undetermined. The fusarin C synthetase FUS1 is responsible for the condensation of one acetyl-coenzyme A (CoA) unit with six malonyl-CoA units and the amide linkage of the arising heptaketide and homoserine, subsequently releasing the first intermediate, prefusarin, as an alcohol with an open ring structure. The cytochrome P450 monooxygenase FUS8 participates in multiple oxidation processes at carbon C-20 and is able to use the FUS1 product as substrate, resulting in formation of 20-hydroxy-prefusarin. This reaction seems to be essential before the 2-pyrrolidone ring closure can be catalyzed by FUS2, generating 20-hydroxy-fusarin. FUS8 is able to further oxidizes carbon C-20 after ring closure, resulting in the formation of carboxy-fusarin C. As the last step, FUS9 methylates the hydroxyl group at C-21 to generate fusarin C. Fusarin C can then rearrange to epi-fusarin C, the (z)-isomers, and fusarin A and fusarin D. The polypeptide is Methyltransferase FUS9 (Gibberella fujikuroi (strain CBS 195.34 / IMI 58289 / NRRL A-6831) (Bakanae and foot rot disease fungus)).